The primary structure comprises 231 residues: UMP-CMP kinase (231 aa).

Residue 57-62 coordinates ATP; the sequence is GSGKGT. Positions 77 to 106 are NMP; sequence SAGDLLRREIASGSAYGSVILSTIREGKIV. A ribonucleoside 5'-phosphate-binding positions include Arg-83, 104–106, and 131–134; these read KIV and GFPR. Asn-138 lines the CMP pocket. The tract at residues 169 to 177 is LID; that stretch reads NRNQGRVDD. Arg-170 is an ATP binding site. Positions 174 and 185 each coordinate a ribonucleoside 5'-phosphate. Gly-213 serves as a coordination point for ATP.

This sequence belongs to the adenylate kinase family. UMP-CMP kinase subfamily. In terms of assembly, monomer. The cofactor is Mg(2+).

The protein localises to the cytoplasm. Its subcellular location is the nucleus. The enzyme catalyses CMP + ATP = CDP + ADP. It carries out the reaction dCMP + ATP = dCDP + ADP. It catalyses the reaction UMP + ATP = UDP + ADP. Functionally, catalyzes the phosphorylation of pyrimidine nucleoside monophosphates at the expense of ATP. Plays an important role in de novo pyrimidine nucleotide biosynthesis. Has preference for UMP and CMP as phosphate acceptors. The protein is UMP-CMP kinase of Prunus armeniaca (Apricot).